We begin with the raw amino-acid sequence, 384 residues long: Succinyl-diaminopimelate desuccinylase (384 aa).

H71 is a Zn(2+) binding site. D73 is a catalytic residue. Residue D104 participates in Zn(2+) binding. E139 (proton acceptor) is an active-site residue. 3 residues coordinate Zn(2+): E140, E168, and H357.

It belongs to the peptidase M20A family. DapE subfamily. Homodimer. The cofactor is Zn(2+). Co(2+) is required as a cofactor.

It catalyses the reaction N-succinyl-(2S,6S)-2,6-diaminopimelate + H2O = (2S,6S)-2,6-diaminopimelate + succinate. It participates in amino-acid biosynthesis; L-lysine biosynthesis via DAP pathway; LL-2,6-diaminopimelate from (S)-tetrahydrodipicolinate (succinylase route): step 3/3. Functionally, catalyzes the hydrolysis of N-succinyl-L,L-diaminopimelic acid (SDAP), forming succinate and LL-2,6-diaminopimelate (DAP), an intermediate involved in the bacterial biosynthesis of lysine and meso-diaminopimelic acid, an essential component of bacterial cell walls. The chain is Succinyl-diaminopimelate desuccinylase from Afipia carboxidovorans (strain ATCC 49405 / DSM 1227 / KCTC 32145 / OM5) (Oligotropha carboxidovorans).